Reading from the N-terminus, the 188-residue chain is Elongation factor P (188 aa).

Lysine 34 carries the post-translational modification N6-(3,6-diaminohexanoyl)-5-hydroxylysine.

It belongs to the elongation factor P family. In terms of processing, may be beta-lysylated on the epsilon-amino group of Lys-34 by the combined action of EpmA and EpmB, and then hydroxylated on the C5 position of the same residue by EpmC (if this protein is present). Lysylation is critical for the stimulatory effect of EF-P on peptide-bond formation. The lysylation moiety may extend toward the peptidyltransferase center and stabilize the terminal 3-CCA end of the tRNA. Hydroxylation of the C5 position on Lys-34 may allow additional potential stabilizing hydrogen-bond interactions with the P-tRNA.

It localises to the cytoplasm. Its pathway is protein biosynthesis; polypeptide chain elongation. Involved in peptide bond synthesis. Alleviates ribosome stalling that occurs when 3 or more consecutive Pro residues or the sequence PPG is present in a protein, possibly by augmenting the peptidyl transferase activity of the ribosome. Modification of Lys-34 is required for alleviation. This chain is Elongation factor P, found in Pseudoalteromonas translucida (strain TAC 125).